Consider the following 354-residue polypeptide: Serum paraoxonase/lactonase 3 (354 aa).

Cysteine 42 and cysteine 352 are disulfide-bonded. Asparagine 50 carries an N-linked (GlcNAc...) asparagine glycan. Positions 53 and 54 each coordinate Ca(2+). Histidine 114 acts as the Proton acceptor in catalysis. Position 116 (isoleucine 116) interacts with Ca(2+). Serine 165 bears the Phosphoserine mark. Positions 167, 168, 223, 268, and 269 each coordinate Ca(2+). N-linked (GlcNAc...) asparagine glycosylation occurs at asparagine 269.

It belongs to the paraoxonase family. As to quaternary structure, homodimer. It depends on Ca(2+) as a cofactor. Post-translationally, glycosylated. In terms of processing, the signal sequence is not cleaved.

Its subcellular location is the secreted. It is found in the extracellular space. It catalyses the reaction a phenyl acetate + H2O = a phenol + acetate + H(+). The catalysed reaction is An aryl dialkyl phosphate + H2O = dialkyl phosphate + an aryl alcohol.. The enzyme catalyses an N-acyl-L-homoserine lactone + H2O = an N-acyl-L-homoserine + H(+). Its function is as follows. Has low activity towards the organophosphate paraxon and aromatic carboxylic acid esters. Rapidly hydrolyzes lactones such as statin prodrugs (e.g. lovastatin). Hydrolyzes aromatic lactones and 5- or 6-member ring lactones with aliphatic substituents but not simple lactones or those with polar substituents. This chain is Serum paraoxonase/lactonase 3 (PON3), found in Oryctolagus cuniculus (Rabbit).